The primary structure comprises 334 residues: Beta-hexosaminidase (334 aa).

Substrate contacts are provided by residues Asp62, Arg70, Arg130, and Lys160–His161. His173 serves as the catalytic Proton donor/acceptor. Asp243 functions as the Nucleophile in the catalytic mechanism.

This sequence belongs to the glycosyl hydrolase 3 family. NagZ subfamily.

It localises to the cytoplasm. The enzyme catalyses Hydrolysis of terminal non-reducing N-acetyl-D-hexosamine residues in N-acetyl-beta-D-hexosaminides.. Its pathway is cell wall biogenesis; peptidoglycan recycling. In terms of biological role, plays a role in peptidoglycan recycling by cleaving the terminal beta-1,4-linked N-acetylglucosamine (GlcNAc) from peptide-linked peptidoglycan fragments, giving rise to free GlcNAc, anhydro-N-acetylmuramic acid and anhydro-N-acetylmuramic acid-linked peptides. The polypeptide is Beta-hexosaminidase (Photobacterium profundum (strain SS9)).